Here is a 239-residue protein sequence, read N- to C-terminus: uncharacterized protein (239 aa).

The N-terminal stretch at 1–23 is a signal peptide; sequence MKTMVAMLLAAVGVAVSASSTLA. The span at 220 to 230 shows a compositional bias: basic and acidic residues; the sequence is AHPKQTLRDQR. The disordered stretch occupies residues 220 to 239; that stretch reads AHPKQTLRDQRPAGGDEITK.

This is an uncharacterized protein from Sinorhizobium fredii (strain NBRC 101917 / NGR234).